Here is a 175-residue protein sequence, read N- to C-terminus: UPF0398 protein SPD_0338 (175 aa).

The protein belongs to the UPF0398 family.

The protein is UPF0398 protein SPD_0338 of Streptococcus pneumoniae serotype 2 (strain D39 / NCTC 7466).